The chain runs to 418 residues: Tyrosine--tRNA ligase (418 aa).

Tyrosine 34 serves as a coordination point for L-tyrosine. A 'HIGH' region motif is present at residues 39–48 (PTADSLHLGH). Positions 169 and 173 each coordinate L-tyrosine. The 'KMSKS' region motif lies at 229–233 (KFGKS). Lysine 232 contributes to the ATP binding site. The 67-residue stretch at 352 to 418 (LNLVDMLVTA…GKKKYAVLTY (67 aa)) folds into the S4 RNA-binding domain.

Belongs to the class-I aminoacyl-tRNA synthetase family. TyrS type 1 subfamily. As to quaternary structure, homodimer.

The protein localises to the cytoplasm. It carries out the reaction tRNA(Tyr) + L-tyrosine + ATP = L-tyrosyl-tRNA(Tyr) + AMP + diphosphate + H(+). Catalyzes the attachment of tyrosine to tRNA(Tyr) in a two-step reaction: tyrosine is first activated by ATP to form Tyr-AMP and then transferred to the acceptor end of tRNA(Tyr). This Streptococcus pyogenes serotype M12 (strain MGAS2096) protein is Tyrosine--tRNA ligase.